Here is a 253-residue protein sequence, read N- to C-terminus: Proproteinase E (253 aa).

Positions 1–11 are cleaved as a propeptide — activation peptide; the sequence is FSQPFSRPSSR. The 240-residue stretch at 12–251 folds into the Peptidase S1 domain; that stretch reads VVNGEDAVPY…FIDWIDETIA (240 aa). Disulfide bonds link C41-C57, C100-C103, C140-C206, C171-C187, and C196-C227.

The protein belongs to the peptidase S1 family. As to quaternary structure, monomer. The zymogen is secreted as a ternary complex composed of procarboxypeptidase A, chymotrypsinogen C and proproteinase E. Pancreas.

It is found in the secreted. It localises to the extracellular space. Functionally, may protect procarboxypeptidase A against denaturation in the acidic environment of the ruminant duodenum. In Bos taurus (Bovine), this protein is Proproteinase E.